The sequence spans 423 residues: Sulfate adenylyltransferase (423 aa).

Residues Gln-207 and Arg-209 each coordinate sulfate. ATP contacts are provided by residues 207–210 and 301–304; these read QLRN and GRDH. Active-site residues include Arg-209 and Asn-210. Ala-305 serves as a coordination point for sulfate.

This sequence belongs to the sulfate adenylyltransferase family.

The protein resides in the mitosome. The enzyme catalyses sulfate + ATP + H(+) = adenosine 5'-phosphosulfate + diphosphate. It functions in the pathway sulfur metabolism; hydrogen sulfide biosynthesis; sulfite from sulfate: step 1/3. Catalyzes the first intracellular reaction of sulfate assimilation, forming adenosine-5'-phosphosulfate (APS) from inorganic sulfate and ATP. This Entamoeba histolytica (strain ATCC 30459 / HM-1:IMSS / ABRM) protein is Sulfate adenylyltransferase.